The following is a 141-amino-acid chain: Large ribosomal subunit protein mL42 (141 aa).

The transit peptide at 1-31 (MTAAVKWAVSHRTIWRHLFPIQNGAISSACH) directs the protein to the mitochondrion.

Belongs to the mitochondrion-specific ribosomal protein mL42 family. As to quaternary structure, component of the mitochondrial ribosome large subunit (39S) which comprises a 16S rRNA and about 50 distinct proteins. Component of the mitochondrial ribosome small subunit (28S) which comprises a 12S rRNA and about 30 distinct proteins.

The protein resides in the mitochondrion. This is Large ribosomal subunit protein mL42 (Mrpl42) from Rattus norvegicus (Rat).